A 389-amino-acid polypeptide reads, in one-letter code: Xylose isomerase (389 aa).

Catalysis depends on residues His-54 and Asp-57. Residues Glu-181, Glu-217, His-220, Asp-245, Asp-255, Asp-257, and Asp-287 each contribute to the Mg(2+) site.

The protein belongs to the xylose isomerase family. Homotetramer. The cofactor is Mg(2+).

It localises to the cytoplasm. It catalyses the reaction alpha-D-xylose = alpha-D-xylulofuranose. Functionally, involved in D-xylose catabolism. In Streptomyces violaceusniger, this protein is Xylose isomerase (xylA).